The chain runs to 641 residues: Threonine--tRNA ligase (641 aa).

The region spanning 1–61 (MPAITLPDGS…ADDASVRFIT (61 aa)) is the TGS domain. A catalytic region spans residues 243-536 (DHRRIGREMD…LIEQHAGRFP (294 aa)). Zn(2+) contacts are provided by cysteine 336, histidine 387, and histidine 513.

This sequence belongs to the class-II aminoacyl-tRNA synthetase family. In terms of assembly, homodimer. Zn(2+) serves as cofactor.

The protein localises to the cytoplasm. It carries out the reaction tRNA(Thr) + L-threonine + ATP = L-threonyl-tRNA(Thr) + AMP + diphosphate + H(+). Functionally, catalyzes the attachment of threonine to tRNA(Thr) in a two-step reaction: L-threonine is first activated by ATP to form Thr-AMP and then transferred to the acceptor end of tRNA(Thr). Also edits incorrectly charged L-seryl-tRNA(Thr). This Gluconacetobacter diazotrophicus (strain ATCC 49037 / DSM 5601 / CCUG 37298 / CIP 103539 / LMG 7603 / PAl5) protein is Threonine--tRNA ligase.